The primary structure comprises 154 residues: 6,7-dimethyl-8-ribityllumazine synthase (154 aa).

5-amino-6-(D-ribitylamino)uracil contacts are provided by residues Phe22, 56–58 (AFE), and 80–82 (AVI). Residue 85–86 (AT) participates in (2S)-2-hydroxy-3-oxobutyl phosphate binding. His88 functions as the Proton donor in the catalytic mechanism. Residue Phe113 coordinates 5-amino-6-(D-ribitylamino)uracil. Residue Arg127 coordinates (2S)-2-hydroxy-3-oxobutyl phosphate.

Belongs to the DMRL synthase family.

It catalyses the reaction (2S)-2-hydroxy-3-oxobutyl phosphate + 5-amino-6-(D-ribitylamino)uracil = 6,7-dimethyl-8-(1-D-ribityl)lumazine + phosphate + 2 H2O + H(+). It participates in cofactor biosynthesis; riboflavin biosynthesis; riboflavin from 2-hydroxy-3-oxobutyl phosphate and 5-amino-6-(D-ribitylamino)uracil: step 1/2. Functionally, catalyzes the formation of 6,7-dimethyl-8-ribityllumazine by condensation of 5-amino-6-(D-ribitylamino)uracil with 3,4-dihydroxy-2-butanone 4-phosphate. This is the penultimate step in the biosynthesis of riboflavin. The polypeptide is 6,7-dimethyl-8-ribityllumazine synthase (Desulfitobacterium hafniense (strain DSM 10664 / DCB-2)).